The primary structure comprises 684 residues: Methionine--tRNA ligase (684 aa).

The 'HIGH' region motif lies at 15-25 (PYANGAIHLGH). Zn(2+) is bound by residues cysteine 146, cysteine 149, cysteine 159, and cysteine 162. Positions 331 to 335 (KMSKS) match the 'KMSKS' region motif. Lysine 334 is an ATP binding site. The tRNA-binding domain maps to 582–684 (DFAKLDLRVA…SGVTAGMQVR (103 aa)).

Belongs to the class-I aminoacyl-tRNA synthetase family. MetG type 1 subfamily. Homodimer. It depends on Zn(2+) as a cofactor.

It localises to the cytoplasm. It catalyses the reaction tRNA(Met) + L-methionine + ATP = L-methionyl-tRNA(Met) + AMP + diphosphate. In terms of biological role, is required not only for elongation of protein synthesis but also for the initiation of all mRNA translation through initiator tRNA(fMet) aminoacylation. This chain is Methionine--tRNA ligase, found in Glaesserella parasuis serovar 5 (strain SH0165) (Haemophilus parasuis).